Reading from the N-terminus, the 344-residue chain is uncharacterized protein (344 aa).

It belongs to the glycosyltransferase 28 family.

This is an uncharacterized protein from Methanopyrus kandleri (strain AV19 / DSM 6324 / JCM 9639 / NBRC 100938).